We begin with the raw amino-acid sequence, 490 residues long: Thiamine biosynthesis bifunctional protein ThiED (490 aa).

Residues Met1–Ile213 are thiamine-phosphate synthase. 4-amino-2-methyl-5-(diphosphooxymethyl)pyrimidine-binding positions include Gln50–Lys54 and Asn82. Asp83 and Asp102 together coordinate Mg(2+). Ser121 lines the 4-amino-2-methyl-5-(diphosphooxymethyl)pyrimidine pocket. Ser147–Ser149 serves as a coordination point for 2-[(2R,5Z)-2-carboxy-4-methylthiazol-5(2H)-ylidene]ethyl phosphate. Lys150 contributes to the 4-amino-2-methyl-5-(diphosphooxymethyl)pyrimidine binding site. 2-[(2R,5Z)-2-carboxy-4-methylthiazol-5(2H)-ylidene]ethyl phosphate-binding positions include Gly177 and Ile197 to Ser198. The tract at residues Leu229–Arg490 is hydroxymethylpyrimidine/phosphomethylpyrimidine kinase. Gln266 is a binding site for 4-amino-5-hydroxymethyl-2-methylpyrimidine.

It in the N-terminal section; belongs to the thiamine-phosphate synthase family. This sequence in the C-terminal section; belongs to the ThiD family. It depends on Mg(2+) as a cofactor.

The catalysed reaction is 2-[(2R,5Z)-2-carboxy-4-methylthiazol-5(2H)-ylidene]ethyl phosphate + 4-amino-2-methyl-5-(diphosphooxymethyl)pyrimidine + 2 H(+) = thiamine phosphate + CO2 + diphosphate. The enzyme catalyses 2-(2-carboxy-4-methylthiazol-5-yl)ethyl phosphate + 4-amino-2-methyl-5-(diphosphooxymethyl)pyrimidine + 2 H(+) = thiamine phosphate + CO2 + diphosphate. It carries out the reaction 4-methyl-5-(2-phosphooxyethyl)-thiazole + 4-amino-2-methyl-5-(diphosphooxymethyl)pyrimidine + H(+) = thiamine phosphate + diphosphate. It catalyses the reaction 4-amino-5-hydroxymethyl-2-methylpyrimidine + ATP = 4-amino-2-methyl-5-(phosphooxymethyl)pyrimidine + ADP + H(+). The catalysed reaction is 4-amino-2-methyl-5-(phosphooxymethyl)pyrimidine + ATP = 4-amino-2-methyl-5-(diphosphooxymethyl)pyrimidine + ADP. Its pathway is cofactor biosynthesis; thiamine diphosphate biosynthesis; 4-amino-2-methyl-5-diphosphomethylpyrimidine from 5-amino-1-(5-phospho-D-ribosyl)imidazole: step 3/3. It participates in cofactor biosynthesis; thiamine diphosphate biosynthesis; thiamine phosphate from 4-amino-2-methyl-5-diphosphomethylpyrimidine and 4-methyl-5-(2-phosphoethyl)-thiazole: step 1/1. In terms of biological role, condenses 4-methyl-5-(beta-hydroxyethyl)thiazole monophosphate (THZ-P) and 2-methyl-4-amino-5-hydroxymethyl pyrimidine pyrophosphate (HMP-PP) to form thiamine monophosphate (TMP). Catalyzes the phosphorylation of hydroxymethylpyrimidine phosphate (HMP-P) to HMP-PP, and of HMP to HMP-P. The protein is Thiamine biosynthesis bifunctional protein ThiED (thiDE) of Geobacter sulfurreducens (strain ATCC 51573 / DSM 12127 / PCA).